The following is a 254-amino-acid chain: Pimeloyl-[acyl-carrier protein] methyl ester esterase (254 aa).

The 226-residue stretch at 16–241 folds into the AB hydrolase-1 domain; sequence LVLLHGWGMN…QSSHAPFMTE (226 aa). Residues W22, 82 to 83, and 143 to 147 each bind substrate; these read SL and FMALQ. The active-site Nucleophile is S82. Residues D207 and H235 contribute to the active site. H235 provides a ligand contact to substrate.

The protein belongs to the AB hydrolase superfamily. Carboxylesterase BioH family. In terms of assembly, monomer.

It localises to the cytoplasm. The catalysed reaction is 6-carboxyhexanoyl-[ACP] methyl ester + H2O = 6-carboxyhexanoyl-[ACP] + methanol + H(+). It participates in cofactor biosynthesis; biotin biosynthesis. The physiological role of BioH is to remove the methyl group introduced by BioC when the pimeloyl moiety is complete. It allows to synthesize pimeloyl-ACP via the fatty acid synthetic pathway through the hydrolysis of the ester bonds of pimeloyl-ACP esters. This is Pimeloyl-[acyl-carrier protein] methyl ester esterase from Vibrio campbellii (strain ATCC BAA-1116).